Here is a 557-residue protein sequence, read N- to C-terminus: Protein NRT1/ PTR FAMILY 5.10 (557 aa).

The next 2 membrane-spanning stretches (helical) occupy residues 49–67 (FAYYGISSNLITYLTGPLG) and 79–99 (AWSGTASLLPLLGAFVADSFL). At threonine 104 the chain carries Phosphothreonine. 10 consecutive transmembrane segments (helical) span residues 105 to 125 (ILAASALYIVGLGVLTLSAMI), 144 to 164 (VITFFSALYLVALAQGGHKPC), 186 to 206 (SFFNWWYFGMCFGTLTTLWVL), 215 to 235 (WALGFGIPCIAMVVALVVLLL), 320 to 340 (APIWLTCLVYAVVFAQSPTFF), 365 to 385 (FISLSIVIFIPIYDRVLIPIA), 401 to 421 (IGTGIFLSFLAMVVAALVEMK), 443 to 463 (VWWLVPQYVLFGITDVFAMVG), 479 to 499 (VGLALYLSIFGIGNFLSSFMI), and 526 to 546 (YFYWLLACLSFIGLASYLYVA).

This sequence belongs to the major facilitator superfamily. Proton-dependent oligopeptide transporter (POT/PTR) (TC 2.A.17) family. As to expression, expressed in shoots, roots and stems. Detected in leaves, flowers and siliques.

The protein localises to the membrane. The protein is Protein NRT1/ PTR FAMILY 5.10 (NPF5.10) of Arabidopsis thaliana (Mouse-ear cress).